Consider the following 318-residue polypeptide: NADH-ubiquinone oxidoreductase chain 1 (318 aa).

A run of 8 helical transmembrane segments spans residues 3–23 (TMNL…LTLV), 69–89 (ILYI…WTPL), 98–118 (FNLG…SILW), 135–155 (AVAQ…SILL), 171–191 (HLWL…STLA), 217–237 (AGPF…MNAL), 253–273 (ELFT…FLWI), and 294–314 (LPLT…ISSI).

It belongs to the complex I subunit 1 family. Core subunit of respiratory chain NADH dehydrogenase (Complex I) which is composed of 45 different subunits.

It localises to the mitochondrion inner membrane. It carries out the reaction a ubiquinone + NADH + 5 H(+)(in) = a ubiquinol + NAD(+) + 4 H(+)(out). In terms of biological role, core subunit of the mitochondrial membrane respiratory chain NADH dehydrogenase (Complex I) which catalyzes electron transfer from NADH through the respiratory chain, using ubiquinone as an electron acceptor. Essential for the catalytic activity and assembly of complex I. The chain is NADH-ubiquinone oxidoreductase chain 1 (MT-ND1) from Papio hamadryas (Hamadryas baboon).